The sequence spans 445 residues: Methylthioribose-1-phosphate isomerase (445 aa).

The Proton donor role is filled by D286.

Belongs to the eIF-2B alpha/beta/delta subunits family. MtnA subfamily.

It localises to the cytoplasm. Its subcellular location is the nucleus. The enzyme catalyses 5-(methylsulfanyl)-alpha-D-ribose 1-phosphate = 5-(methylsulfanyl)-D-ribulose 1-phosphate. Its pathway is amino-acid biosynthesis; L-methionine biosynthesis via salvage pathway; L-methionine from S-methyl-5-thio-alpha-D-ribose 1-phosphate: step 1/6. Its function is as follows. Catalyzes the interconversion of methylthioribose-1-phosphate (MTR-1-P) into methylthioribulose-1-phosphate (MTRu-1-P). The polypeptide is Methylthioribose-1-phosphate isomerase (mri1) (Sclerotinia sclerotiorum (strain ATCC 18683 / 1980 / Ss-1) (White mold)).